The sequence spans 205 residues: Probable GTP-binding protein EngB (205 aa).

Positions 29–203 (QGAEIAFIGR…KAVLSQWFSS (175 aa)) constitute an EngB-type G domain. GTP is bound by residues 37-44 (GRSNAGKS), 64-68 (GRTQM), 82-85 (DLPG), 149-152 (TKSD), and 182-184 (FSS). Mg(2+) contacts are provided by serine 44 and threonine 66.

The protein belongs to the TRAFAC class TrmE-Era-EngA-EngB-Septin-like GTPase superfamily. EngB GTPase family. Requires Mg(2+) as cofactor.

Its function is as follows. Necessary for normal cell division and for the maintenance of normal septation. In Coxiella burnetii (strain CbuK_Q154) (Coxiella burnetii (strain Q154)), this protein is Probable GTP-binding protein EngB.